Consider the following 129-residue polypeptide: Succinate dehydrogenase assembly factor 3, mitochondrial (129 aa).

Belongs to the complex I LYR family. SDHAF3 subfamily. In terms of assembly, interacts with the iron-sulfur protein subunit within the SDH catalytic dimer.

Its subcellular location is the mitochondrion matrix. Functionally, plays an essential role in the assembly of succinate dehydrogenase (SDH), an enzyme complex (also referred to as respiratory complex II) that is a component of both the tricarboxylic acid (TCA) cycle and the mitochondrial electron transport chain, and which couples the oxidation of succinate to fumarate with the reduction of ubiquinone (coenzyme Q) to ubiquinol. Promotes maturation of the iron-sulfur protein subunit of the SDH catalytic dimer, protecting it from the deleterious effects of oxidants. May act together with SDHAF1. This chain is Succinate dehydrogenase assembly factor 3, mitochondrial, found in Aspergillus fumigatus (strain ATCC MYA-4609 / CBS 101355 / FGSC A1100 / Af293) (Neosartorya fumigata).